The primary structure comprises 218 residues: Type II restriction enzyme KpnI (218 aa).

The catalysed reaction is Endonucleolytic cleavage of DNA to give specific double-stranded fragments with terminal 5'-phosphates.. Functionally, a P subtype restriction enzyme that recognizes the double-stranded sequence 5'-GGTACC-3' and cleaves after C-5. The chain is Type II restriction enzyme KpnI from Klebsiella pneumoniae.